The following is a 258-amino-acid chain: Flagellar brake protein YcgR (258 aa).

The PilZ domain maps to 131–248 (QKREYYRVAT…ALSLIQRYIT (118 aa)).

The protein belongs to the YcgR family. In terms of assembly, monomer. Interacts with the flagellar basal bodies.

It is found in the bacterial flagellum basal body. Acts as a flagellar brake, regulating swimming and swarming in a bis-(3'-5') cyclic diguanylic acid (c-di-GMP)-dependent manner. Binds 1 c-di-GMP dimer per subunit. Increasing levels of c-di-GMP lead to decreased motility. This is Flagellar brake protein YcgR from Nitrosospira multiformis (strain ATCC 25196 / NCIMB 11849 / C 71).